The chain runs to 155 residues: Ribonuclease H (155 aa).

An RNase H type-1 domain is found at 1-142 (MLKQVEIFTD…CDELARAAAS (142 aa)). The Mg(2+) site is built by Asp-10, Glu-48, Asp-70, and Asp-134.

This sequence belongs to the RNase H family. As to quaternary structure, monomer. Mg(2+) serves as cofactor.

The protein localises to the cytoplasm. The enzyme catalyses Endonucleolytic cleavage to 5'-phosphomonoester.. Endonuclease that specifically degrades the RNA of RNA-DNA hybrids. The protein is Ribonuclease H of Klebsiella pneumoniae (strain 342).